A 38-amino-acid chain; its full sequence is Photosystem I reaction center subunit IX (38 aa).

The chain crosses the membrane as a helical span at residues 6 to 26; that stretch reads YLSTAPVVATLWLFLTAGILI.

Belongs to the PsaJ family.

The protein resides in the plastid. It is found in the chloroplast thylakoid membrane. Its function is as follows. May help in the organization of the PsaE and PsaF subunits. The polypeptide is Photosystem I reaction center subunit IX (Cyanidioschyzon merolae (strain NIES-3377 / 10D) (Unicellular red alga)).